The primary structure comprises 196 residues: Glycerol-3-phosphate acyltransferase (196 aa).

6 consecutive transmembrane segments (helical) span residues 5 to 25, 53 to 73, 80 to 100, 107 to 127, 130 to 150, and 153 to 173; these read VYLL…IIFC, FSAL…VLLA, PSEI…PLFF, GVAT…AAGL, WLIV…TALI, and FYIW…CCLL.

Belongs to the PlsY family. In terms of assembly, probably interacts with PlsX.

The protein resides in the cell inner membrane. The catalysed reaction is an acyl phosphate + sn-glycerol 3-phosphate = a 1-acyl-sn-glycero-3-phosphate + phosphate. It participates in lipid metabolism; phospholipid metabolism. Its function is as follows. Catalyzes the transfer of an acyl group from acyl-phosphate (acyl-PO(4)) to glycerol-3-phosphate (G3P) to form lysophosphatidic acid (LPA). This enzyme utilizes acyl-phosphate as fatty acyl donor, but not acyl-CoA or acyl-ACP. The polypeptide is Glycerol-3-phosphate acyltransferase (Actinobacillus pleuropneumoniae serotype 7 (strain AP76)).